The following is a 601-amino-acid chain: Ubiquitin carboxyl-terminal hydrolase MINDY-2 (601 aa).

A disordered region spans residues 1-205 (MENSPDSPQP…LCKEEEEDPA (205 aa)). Residues 24-34 (EGRRRGGREAE) show a composition bias toward basic and acidic residues. Thr-62 bears the Phosphothreonine mark. Ser-82 is subject to Phosphoserine. 3 stretches are compositionally biased toward low complexity: residues 127–141 (EEPSSTGAPSSSCSE), 148–169 (SPSLDSLESFSNLHSFPSSSEF), and 186–195 (GAAGPPRAAP). Cys-244 acts as the Nucleophile in catalysis. His-426 functions as the Proton acceptor in the catalytic mechanism. Residues 485–537 (GQQDQIDQDYLMALSLQQEQQSQEINWEQIPEGISDLELAKKLQEEEDRRASQ) form a ubiquitin-binding domain (UBD) region. Residues 534-601 (RASQYYQEQE…EKEKNSCVIL (68 aa)) are disordered. Positions 536 to 570 (SQYYQEQEQAQAVVTTTTPSTQAQQGQPAQASPSS) are enriched in low complexity. The segment covering 577–601 (SERKRKEPREKDKEKEKEKNSCVIL) has biased composition (basic and acidic residues).

Belongs to the MINDY deubiquitinase family. FAM63 subfamily.

The enzyme catalyses Thiol-dependent hydrolysis of ester, thioester, amide, peptide and isopeptide bonds formed by the C-terminal Gly of ubiquitin (a 76-residue protein attached to proteins as an intracellular targeting signal).. Its function is as follows. Hydrolase that can remove 'Lys-48'-linked conjugated ubiquitin from proteins. Can also bind to polyubiquitin chains of different linkage types, including 'Lys-6', 'Lys-11', 'Lys-29', 'Lys-33' and 'Lys-63'. May play a regulatory role at the level of protein turnover. The protein is Ubiquitin carboxyl-terminal hydrolase MINDY-2 (Mindy2) of Mus musculus (Mouse).